Consider the following 1434-residue polypeptide: Receptor-type tyrosine-protein phosphatase U (1434 aa).

Residues 1 to 17 (MRSARALLLALALRVCA) form the signal peptide. Over 18 to 748 (LDSETPSAGC…QHSEEMGLIL (731 aa)) the chain is Extracellular. The 163-residue stretch at 25–187 (AGCTFEEDDD…ILLLNYPCSK (163 aa)) folds into the MAM domain. The N-linked (GlcNAc...) asparagine glycan is linked to asparagine 74. Residues 189–274 (PHFSRLGDVE…TQSSRGSGVS (86 aa)) form the Ig-like C2-type domain. A disulfide bridge connects residues cysteine 209 and cysteine 263. 4 Fibronectin type-III domains span residues 287-382 (PIAP…CAEP), 385-483 (APKG…TDED), 484-590 (VPGG…SAPT), and 597-677 (PSPL…TEAK). Residue asparagine 409 is glycosylated (N-linked (GlcNAc...) asparagine). An N-linked (GlcNAc...) asparagine glycan is attached at asparagine 684. Residues 749 to 769 (GICAGGLVVLIILLGAIIVVI) form a helical membrane-spanning segment. Topologically, residues 770-1434 (RKGKPVNMTK…LEYLESLETR (665 aa)) are cytoplasmic. A compositionally biased stretch (polar residues) spans 824-839 (RGDQRSSVVNESSSLL). The disordered stretch occupies residues 824–851 (RGDQRSSVVNESSSLLGGSPRRQCGRKG). Tyrosine-protein phosphatase domains are found at residues 876–1132 (KTAE…ILEA) and 1164–1427 (LREE…ALEY). Residues glutamate 1041, 1073-1079 (CSAGTGR), and glutamine 1117 contribute to the substrate site. The active-site Phosphocysteine intermediate is the cysteine 1073. Cysteine 1368 acts as the Phosphocysteine intermediate in catalysis.

It belongs to the protein-tyrosine phosphatase family. Receptor class 2B subfamily.

Its subcellular location is the cell junction. It localises to the cell membrane. It carries out the reaction O-phospho-L-tyrosyl-[protein] + H2O = L-tyrosyl-[protein] + phosphate. In terms of biological role, tyrosine-protein phosphatase which dephosphorylates CTNNB1. May function in cell proliferation and migration and play a role in the maintenance of epithelial integrity. This chain is Receptor-type tyrosine-protein phosphatase U (PTPRU), found in Gallus gallus (Chicken).